Here is a 289-residue protein sequence, read N- to C-terminus: Probable 2-keto-3-deoxyxylonate dehydratase (289 aa).

Mg(2+)-binding residues include E144, E146, and D164.

It belongs to the FAH family.

It carries out the reaction 2-dehydro-3-deoxy-D-arabinonate = 2,5-dioxopentanoate + H2O. Its pathway is carbohydrate metabolism; D-xylose degradation. In terms of biological role, probable 2-keto-3-deoxyxylonate dehydratase involved in the degradation of D-xylose, a major component of hemicelluloses such as xylan. Catalyzes the fourth reaction in the xylose utilization pathway through dehydratation of 2-dehydro-3-deoxy-D-xylonate into alpha-ketoglutarate semialdehyde (2,5-dioxopentanoate). The chain is Probable 2-keto-3-deoxyxylonate dehydratase from Haloferax volcanii (strain ATCC 29605 / DSM 3757 / JCM 8879 / NBRC 14742 / NCIMB 2012 / VKM B-1768 / DS2) (Halobacterium volcanii).